The sequence spans 380 residues: Putative RNA ligase (380 aa).

In terms of biological role, putative RNA ligase. Is able to catalyze the adenylation reaction of ssDNA 3'-terminal phosphate (ssDNA 3'p) to 3'-adenylated DNA (ssDNA 3'pp5'A). The sequence is that of Putative RNA ligase from Thermovibrio ammonificans (strain DSM 15698 / JCM 12110 / HB-1).